A 58-amino-acid chain; its full sequence is Putative transcript Y 13 protein (58 aa).

Residues 17–37 (LLGWDLNLSLFLGLCLMLLLA) form a helical membrane-spanning segment.

It is found in the membrane. In Homo sapiens (Human), this protein is Putative transcript Y 13 protein (TTTY13).